The sequence spans 807 residues: Glycerol-3-phosphate acyltransferase (807 aa).

Positions 308–313 (CHRSHM) match the HXXXXD motif motif.

It belongs to the GPAT/DAPAT family.

The protein resides in the cell inner membrane. The enzyme catalyses sn-glycerol 3-phosphate + an acyl-CoA = a 1-acyl-sn-glycero-3-phosphate + CoA. It participates in phospholipid metabolism; CDP-diacylglycerol biosynthesis; CDP-diacylglycerol from sn-glycerol 3-phosphate: step 1/3. This Shewanella denitrificans (strain OS217 / ATCC BAA-1090 / DSM 15013) protein is Glycerol-3-phosphate acyltransferase.